A 316-amino-acid chain; its full sequence is 4-hydroxy-3-methylbut-2-enyl diphosphate reductase (316 aa).

Cys-12 provides a ligand contact to [4Fe-4S] cluster. 2 residues coordinate (2E)-4-hydroxy-3-methylbut-2-enyl diphosphate: His-41 and His-74. Residues His-41 and His-74 each coordinate dimethylallyl diphosphate. His-41 and His-74 together coordinate isopentenyl diphosphate. A [4Fe-4S] cluster-binding site is contributed by Cys-96. His-124 lines the (2E)-4-hydroxy-3-methylbut-2-enyl diphosphate pocket. Residue His-124 participates in dimethylallyl diphosphate binding. His-124 lines the isopentenyl diphosphate pocket. Glu-126 (proton donor) is an active-site residue. (2E)-4-hydroxy-3-methylbut-2-enyl diphosphate is bound at residue Thr-167. Position 197 (Cys-197) interacts with [4Fe-4S] cluster. The (2E)-4-hydroxy-3-methylbut-2-enyl diphosphate site is built by Ser-225, Ser-226, Asn-227, and Ser-269. Ser-225, Ser-226, Asn-227, and Ser-269 together coordinate dimethylallyl diphosphate. Isopentenyl diphosphate is bound by residues Ser-225, Ser-226, Asn-227, and Ser-269.

The protein belongs to the IspH family. As to quaternary structure, homodimer. The cofactor is [4Fe-4S] cluster.

The catalysed reaction is isopentenyl diphosphate + 2 oxidized [2Fe-2S]-[ferredoxin] + H2O = (2E)-4-hydroxy-3-methylbut-2-enyl diphosphate + 2 reduced [2Fe-2S]-[ferredoxin] + 2 H(+). The enzyme catalyses dimethylallyl diphosphate + 2 oxidized [2Fe-2S]-[ferredoxin] + H2O = (2E)-4-hydroxy-3-methylbut-2-enyl diphosphate + 2 reduced [2Fe-2S]-[ferredoxin] + 2 H(+). Its pathway is isoprenoid biosynthesis; dimethylallyl diphosphate biosynthesis; dimethylallyl diphosphate from (2E)-4-hydroxy-3-methylbutenyl diphosphate: step 1/1. It participates in isoprenoid biosynthesis; isopentenyl diphosphate biosynthesis via DXP pathway; isopentenyl diphosphate from 1-deoxy-D-xylulose 5-phosphate: step 6/6. In terms of biological role, catalyzes the conversion of 1-hydroxy-2-methyl-2-(E)-butenyl 4-diphosphate (HMBPP) into a mixture of isopentenyl diphosphate (IPP) and dimethylallyl diphosphate (DMAPP). Acts in the terminal step of the DOXP/MEP pathway for isoprenoid precursor biosynthesis. The polypeptide is 4-hydroxy-3-methylbut-2-enyl diphosphate reductase (Shigella flexneri serotype 5b (strain 8401)).